A 310-amino-acid polypeptide reads, in one-letter code: Olfactory receptor 5P52 (310 aa).

The Extracellular portion of the chain corresponds to 1 to 25 (MEAENHTTVAELIILGLTEDPKLCI). Asn-5 carries an N-linked (GlcNAc...) asparagine glycan. Residues 26–46 (VFFVIFLGVYIITLVGNISII) traverse the membrane as a helical segment. Over 47–54 (TLIRISSQ) the chain is Cytoplasmic. The chain crosses the membrane as a helical span at residues 55 to 75 (LHTPMYLFLSHLAFVDIVFST). Residues 76 to 99 (SVSVIMLMELLGHGLVLSVATCAA) lie on the Extracellular side of the membrane. The cysteines at positions 97 and 189 are disulfide-linked. A helical transmembrane segment spans residues 100–120 (QLCMTVSFGSAECFLLAAMAY). The Cytoplasmic portion of the chain corresponds to 121–133 (DRYVAICSPLLYS). A helical transmembrane segment spans residues 134 to 154 (TLMSSRVCFLLLGISYVGGFV). Residues 155–196 (NGWTFTGCVLSLSFCGPTQINHFFCDFSPLLKVSCSDVSIIG) lie on the Extracellular side of the membrane. The helical transmembrane segment at 197–217 (IIPSISSGSIIVVTVFVIAVS) threads the bilayer. The Cytoplasmic portion of the chain corresponds to 218-237 (YIYILITILKMRSTEGRHKA). A helical membrane pass occupies residues 238–258 (FSTCTSHLTAVTLFYGTITVI). At 259 to 271 (YVMPKSSYSTEQN) the chain is on the extracellular side. A helical transmembrane segment spans residues 272-292 (KVISLFYTVVIPMLNPLIYSL). The Cytoplasmic segment spans residues 293–310 (RNRDVKDALRKAIVRVYS).

Belongs to the G-protein coupled receptor 1 family.

It localises to the cell membrane. In terms of biological role, potential odorant receptor. This chain is Olfactory receptor 5P52, found in Mus musculus (Mouse).